Consider the following 344-residue polypeptide: Fructose-bisphosphate aldolase (344 aa).

Ser-53 is a binding site for D-glyceraldehyde 3-phosphate. Asp-95 functions as the Proton donor in the catalytic mechanism. 4 residues coordinate Zn(2+): His-96, Asp-131, Glu-161, and His-212. Gly-213 lines the dihydroxyacetone phosphate pocket. His-252 is a binding site for Zn(2+). Dihydroxyacetone phosphate-binding positions include 253–255 (GGS) and 274–277 (NVDT).

This sequence belongs to the class II fructose-bisphosphate aldolase family. Zn(2+) is required as a cofactor.

The enzyme catalyses beta-D-fructose 1,6-bisphosphate = D-glyceraldehyde 3-phosphate + dihydroxyacetone phosphate. It functions in the pathway carbohydrate degradation; glycolysis; D-glyceraldehyde 3-phosphate and glycerone phosphate from D-glucose: step 4/4. In terms of biological role, catalyzes the aldol condensation of dihydroxyacetone phosphate (DHAP or glycerone-phosphate) with glyceraldehyde 3-phosphate (G3P) to form fructose 1,6-bisphosphate (FBP) in gluconeogenesis and the reverse reaction in glycolysis. The chain is Fructose-bisphosphate aldolase (fba) from Corynebacterium glutamicum (strain ATCC 13032 / DSM 20300 / JCM 1318 / BCRC 11384 / CCUG 27702 / LMG 3730 / NBRC 12168 / NCIMB 10025 / NRRL B-2784 / 534).